We begin with the raw amino-acid sequence, 181 residues long: Der GTPase-activating protein YihI (181 aa).

Disordered regions lie at residues 1–75 (MSRK…KKIP) and 145–181 (EPEA…DYKG). The segment covering 32-43 (RLRKKDKKRKGL) has biased composition (basic residues). The segment covering 146–155 (PEAEEEFEDE) has biased composition (acidic residues). Residues 156–165 (APVRKSRSDD) are compositionally biased toward basic and acidic residues. The segment covering 166–181 (DLLADFEDFDMDDYKG) has biased composition (acidic residues).

This sequence belongs to the YihI family. In terms of assembly, interacts with Der.

Functionally, a GTPase-activating protein (GAP) that modifies Der/EngA GTPase function. May play a role in ribosome biogenesis. The chain is Der GTPase-activating protein YihI from Vibrio vulnificus (strain YJ016).